The following is a 174-amino-acid chain: Probable phenolic acid decarboxylase (174 aa).

It belongs to the PadC family.

Its function is as follows. Catalyzes the decarboxylation of phenolic acids. This Vibrio cholerae serotype O1 (strain ATCC 39315 / El Tor Inaba N16961) protein is Probable phenolic acid decarboxylase (padC).